A 114-amino-acid polypeptide reads, in one-letter code: Chaperone protein YscY (114 aa).

Binds to YscX.

It localises to the cytoplasm. In terms of biological role, required for Yop secretion. Functions probably as a chaperone which stabilizes YscX within the cell, before its secretion. The chain is Chaperone protein YscY (yscY) from Yersinia enterocolitica.